We begin with the raw amino-acid sequence, 340 residues long: UDP-N-acetylenolpyruvoylglucosamine reductase (340 aa).

In terms of domain architecture, FAD-binding PCMH-type spans 11 to 181 (ISVKAKKIIS…VAIGLKLKKK (171 aa)). The active site involves Arg-156. The Proton donor role is filled by Ser-227. The active site involves Glu-323.

Belongs to the MurB family. FAD is required as a cofactor.

It is found in the cytoplasm. The catalysed reaction is UDP-N-acetyl-alpha-D-muramate + NADP(+) = UDP-N-acetyl-3-O-(1-carboxyvinyl)-alpha-D-glucosamine + NADPH + H(+). It functions in the pathway cell wall biogenesis; peptidoglycan biosynthesis. In terms of biological role, cell wall formation. This is UDP-N-acetylenolpyruvoylglucosamine reductase from Wigglesworthia glossinidia brevipalpis.